A 275-amino-acid polypeptide reads, in one-letter code: Phosphate import ATP-binding protein PstB (275 aa).

The ABC transporter domain maps to 29-270 (VSVRDLNFYY…PTDRRTQDYI (242 aa)). 61-68 (GPSGCGKS) is a binding site for ATP.

It belongs to the ABC transporter superfamily. Phosphate importer (TC 3.A.1.7) family. As to quaternary structure, the complex is composed of two ATP-binding proteins (PstB), two transmembrane proteins (PstC and PstA) and a solute-binding protein (PstS).

The protein localises to the cell inner membrane. It catalyses the reaction phosphate(out) + ATP + H2O = ADP + 2 phosphate(in) + H(+). Its function is as follows. Part of the ABC transporter complex PstSACB involved in phosphate import. Responsible for energy coupling to the transport system. The chain is Phosphate import ATP-binding protein PstB from Rhodopseudomonas palustris (strain BisB18).